Here is a 556-residue protein sequence, read N- to C-terminus: Phospholipase D (556 aa).

The first 47 residues, 1 to 47, serve as a signal peptide directing secretion; it reads MTSDQRPARLPTHKGKLLAPHRLHRLIPVSVALTTVCAALPSSTAYA. One can recognise a PLD phosphodiesterase 1 domain in the interval 210-237; it reads SLSWNHSKLLVVDGKTAITGGINGWKDD. The disordered stretch occupies residues 326–360; sequence SDPSSGYHPDLPTAPDTKCTVGLHDNTNADRDYDT. A PLD phosphodiesterase 2 domain is found at 484–511; it reads KPYALHHKLVSVDDSAFYIGSKNLYPAW.

This sequence belongs to the phospholipase D family. Probably has at least 1 disulfide bond.

It localises to the secreted. It carries out the reaction a 1,2-diacyl-sn-glycero-3-phosphocholine + H2O = a 1,2-diacyl-sn-glycero-3-phosphate + choline + H(+). With respect to regulation, inhibited by mercaptoethanol and dithiothreitol. Functionally, a reversible phospholipase active on phosphatidylcholine (PC) and phosphatidylethanolamine. Lysophosphatidylcholine and egg sphingomyelin are hydrolyzed about 50 times and 100 times more slowly than PC, respectively. During the transphosphatidylation reaction straight-chain hydroxy compounds, such as triethyleneglycol and triethyleneglycol monomethyl ether, were phosphatidylated in good yield, as were monosaccharides. Disaccharides and sugar alcohol reacted slowly, while N-acetyl-D-galactosamine, D-galactosamine and D-galacturonic acid were not phosphatidylated. The chain is Phospholipase D from Streptomyces antibioticus.